Consider the following 594-residue polypeptide: MLPAQKHTLETLLENSVKQVVQASKGDADAAFVLPAIALERPKVAAHGDVACNVALQLAKPLGANPRQLAEQIVAALTAQPEAAGLVDAAEIAGPGFINLRLTPASKQAVIGAVLAQGRAFGASERDHGKRVLLEFVSANPTGPLHVGHGRQAALGDALANVLASQGYAVHREFYYNDAGVQIGNLAISTQARARGLKPGDAGWPEAAYNGEYIADIARDYLNGETVAASDGEPVTGKRDVEDLEAIRKFAVTYLRREQDMDLKAFGVKFDQYYLESSLYTEGRVEKTVDALIAAGMTYEQEGALWLRTTDEGDDKDRVMRKTDGTYTYFVPDVAYHVTKWERGFTKVINIQGSDHHGTIARVRAGLQGLHIGIPKGYPDYVLHKMVTVMRDGQEVKISKRAGSYVTVRDLIEWSGGATPGSEGSPELLDEATITRGRDAVRFFLISRKADTEFVFDIDLALKQNDENPVYYVQYAHARICSVINEWKSRYGATDALLPGADLSPLDSKQAMALMQKLAEYPDVLAHAAGELAPHAVAFYLRELASEFHSFYNAERVLVDEQAPRTARVALLAATRQVLENGLAMLGVSAPSKM.

The 'HIGH' region signature appears at 139–149 (ANPTGPLHVGH).

It belongs to the class-I aminoacyl-tRNA synthetase family. As to quaternary structure, monomer.

The protein localises to the cytoplasm. The enzyme catalyses tRNA(Arg) + L-arginine + ATP = L-arginyl-tRNA(Arg) + AMP + diphosphate. This chain is Arginine--tRNA ligase, found in Burkholderia pseudomallei (strain 1106a).